Consider the following 619-residue polypeptide: MAAAAAAAAAGDSPRRGTPDSDEEDYEEYVPVAKRRAMEAERLRRATKPPTTNAVAVAAPPPPPRSTSSPAVGEVAVKTSLLVKATKLKREAPEVTPAERLLQQEREMIEHLSDRKALMPVGEIAKGISYSEPITTGWRPPLRLRRMPRSRADALRRSWHILVDGDDVPPPSRSFGDLRLPEPILRALRGKGIEKPTPIQVQGLPVALSGRDMIGIAFTGSGKTLVFVLPLIMAALQEEILMPIVPGEGPFGLIVCPSRELARQTHEVIEMFLAPLMEAGYPEIRPLLCIGGVDMRTQMEVVKKGVHIVVATPGRLKDLLSKKKMNLDNCRYLTLDEADRLVDLGFEDDIREVFDHFKAQRQTLLFSATMPEKIQNFAKSALVKPIIVNVGRAGAANLDVIQEVEYVKEEARIIYLLECLQKTPPPVLVFCEHKADVDYIQEFLLLKGVEAVAIHGGKDDEERKDAFKSFKASEKDVLVATDVASKGLDIPDIQHVINYDMPAEIENYVHRIGRTGRRGKTGVATTFINKNQTETTLLDLKQLLIESKQRLPPILADLDDPQEDDKVAIAQQSGVKGCAFCGGLGHRIEACPKQQLQNSVTLARARSDYFGGGGYRGEI.

Composition is skewed to low complexity over residues 1–10 and 49–58; these read MAAAAAAAAA and PPTTNAVAVA. Residues 1-72 form a disordered region; sequence MAAAAAAAAA…PPRSTSSPAV (72 aa). The Q motif motif lies at 173-201; sequence RSFGDLRLPEPILRALRGKGIEKPTPIQV. Residues 204–388 form the Helicase ATP-binding domain; it reads LPVALSGRDM…KSALVKPIIV (185 aa). 217-224 contacts ATP; the sequence is AFTGSGKT. The DEAD box signature appears at 336–339; that stretch reads DEAD. One can recognise a Helicase C-terminal domain in the interval 399–559; sequence DVIQEVEYVK…RLPPILADLD (161 aa). The segment at 576-593 adopts a CCHC-type zinc-finger fold; sequence KGCAFCGGLGHRIEACPK.

The protein belongs to the DEAD box helicase family. DDX41 subfamily.

The catalysed reaction is ATP + H2O = ADP + phosphate + H(+). The chain is DEAD-box ATP-dependent RNA helicase 35B from Oryza sativa subsp. japonica (Rice).